A 2256-amino-acid polypeptide reads, in one-letter code: GON-4-like protein (2256 aa).

Disordered stretches follow at residues 1–56 (MLPC…DSAG), 105–213 (PSLE…SLGP), and 227–266 (LFIP…MTYD). Basic and acidic residues predominate over residues 23–35 (EDLHLEAAVKPDT). Residues 40–53 (DCTSESLSWGQSHD) show a composition bias toward polar residues. Residues 141-176 (TREDGGDHTVPEEPPSGEHAEEVKAEGGELEMHSEG) are compositionally biased toward basic and acidic residues. Over residues 242 to 254 (RKKTKKGTKRKRD) the composition is skewed to basic residues. Phosphoserine is present on Ser346. Residues 366–395 (EDDDSSDEEYQPDEEEEDETAEESLLESDV) show a composition bias toward acidic residues. 3 disordered regions span residues 366 to 428 (EDDD…VLSE), 441 to 460 (SAEV…QTRD), and 545 to 573 (DVEN…DTED). Positions 545-571 (DVENEDEADDDDDPEYNFLEDLDEPDT) are enriched in acidic residues. The interval 609-1363 (EMGFSNMEDD…DCMEEISSDF (755 aa)) is required for interaction with YY1, SIN3A and HDAC1, and transcriptional repression activity. Residue Ser783 is modified to Phosphoserine. Low complexity-rich tracts occupy residues 947 to 959 (TAGG…TETS) and 1094 to 1115 (PWSE…LPSL). Disordered stretches follow at residues 947-969 (TAGG…KTSP), 1078-1141 (AALP…SPCV), 1241-1288 (AEGK…EAVS), and 1360-1620 (SSDF…SRAR). Positions 1119–1135 (KFRKPYVRRKPTRRKGA) are enriched in basic residues. Residues 1364 to 1386 (PKQDIGEEVKEECCMELDRDSPQ) are compositionally biased toward basic and acidic residues. Polar residues-rich tracts occupy residues 1387-1401 (EKAS…QTAT) and 1429-1444 (LPQS…TVLN). At Ser1445 the chain carries Phosphoserine. Positions 1475 to 1495 (GAEEEEEEDFDDLTQDEEDEL) are enriched in acidic residues. Residues 1496–1510 (SSASEESVLSVPELQ) show a composition bias toward low complexity. Residues 1529 to 1553 (GESEEENSQEENSEPEEEEEEEAEG) are compositionally biased toward acidic residues. The span at 1606–1620 (RSSHRARSRRGSRAR) shows a compositional bias: basic residues. PAH domains are found at residues 1644–1716 (EQKD…LLPE) and 1726–1797 (EQQA…FDHL). 2 disordered regions span residues 1831-1886 (VEEE…LKKS) and 1909-1966 (LELV…APIP). Residues 1851 to 1868 (EIGVQHQDKESEWPEAAK) show a composition bias toward basic and acidic residues. Phosphoserine is present on residues Ser1921 and Ser1994. Disordered regions lie at residues 2050-2078 (PETS…STRD) and 2110-2148 (IRGT…VLPK). Residues 2111 to 2129 (RGTSSGASASEAAPTASRE) are compositionally biased toward low complexity. In terms of domain architecture, Myb-like spans 2163–2216 (STGEKVVLWTREADRVILTMCQEQGAQPHTFSVISQQLGNKTPVEVSHRFRELM). The tract at residues 2223–2256 (CEASSEDEDDATSTSNADQLSDHGDLLSEEELDE) is disordered.

In terms of assembly, found in a complex with YY1, SIN3A and HDAC1.

It is found in the nucleus. Has transcriptional repressor activity, probably as part of a complex with YY1, SIN3A and HDAC1. Required for B cell lymphopoiesis. This Rattus norvegicus (Rat) protein is GON-4-like protein (Gon4l).